A 394-amino-acid chain; its full sequence is Elongation factor Tu (394 aa).

Residues 10-205 enclose the tr-type G domain; sequence KPHMNVGTIG…SMDNYFDLPE (196 aa). The tract at residues 19 to 26 is G1; that stretch reads GHVDHGKT. 19–26 is a GTP binding site; that stretch reads GHVDHGKT. Residue T26 participates in Mg(2+) binding. The G2 stretch occupies residues 61–65; the sequence is GITIN. The interval 82–85 is G3; the sequence is DCPG. GTP is bound by residues 82-86 and 137-140; these read DCPGH and NKLD. The tract at residues 137–140 is G4; it reads NKLD. Residues 173-175 form a G5 region; the sequence is SAF.

This sequence belongs to the TRAFAC class translation factor GTPase superfamily. Classic translation factor GTPase family. EF-Tu/EF-1A subfamily. As to quaternary structure, monomer.

Its subcellular location is the cytoplasm. It catalyses the reaction GTP + H2O = GDP + phosphate + H(+). GTP hydrolase that promotes the GTP-dependent binding of aminoacyl-tRNA to the A-site of ribosomes during protein biosynthesis. The polypeptide is Elongation factor Tu (Borreliella burgdorferi (strain ATCC 35210 / DSM 4680 / CIP 102532 / B31) (Borrelia burgdorferi)).